A 94-amino-acid polypeptide reads, in one-letter code: Integration host factor subunit beta (94 aa).

It belongs to the bacterial histone-like protein family. Heterodimer of an alpha and a beta chain.

This protein is one of the two subunits of integration host factor, a specific DNA-binding protein that functions in genetic recombination as well as in transcriptional and translational control. This Brucella abortus (strain S19) protein is Integration host factor subunit beta.